Reading from the N-terminus, the 400-residue chain is Large envelope protein (400 aa).

M1 carries the N-acetylmethionine modification. 3 disordered regions span residues 1–64, 85–118, and 143–174; these read MGGW…GAFG, LTTVPAAPPPASTNRQSGRQPTPISPPLRDSHPQ, and PGGSSSGTVNPVPTTASPISSISSRTGDPAPN. Residue G2 is the site of N-myristoyl glycine; by host attachment. The segment at 2–119 is pre-S1; sequence GGWSSKPRQG…PPLRDSHPQA (118 aa). Residues 2–174 are pre-S; it reads GGWSSKPRQG…SSRTGDPAPN (173 aa). The Virion surface; in external conformation segment spans residues 2–181; the sequence is GGWSSKPRQG…APNMESTTSG (180 aa). At 2 to 253 the chain is on the intravirion; in internal conformation side; it reads GGWSSKPRQG…PGYRWMCLRR (252 aa). Residue W4 is glycosylated (N-linked (GlcNAc...) asparagine). Residues 96 to 106 are compositionally biased toward polar residues; it reads STNRQSGRQPT. Residues 120–174 form a pre-S2 region; the sequence is MQWNSTTFHQVLLDPRVRGLYFPPGGSSSGTVNPVPTTASPISSISSRTGDPAPN. A compositionally biased stretch (low complexity) spans 155 to 166; it reads PTTASPISSISS. Residues 182 to 202 form a helical membrane-spanning segment; it reads FLGPLLVLQAGFFLLTRILTI. Residues 203-253 lie on the Intravirion; in external conformation side of the membrane; that stretch reads PQSLDSWWTSLNFLGGAPTCPGQNSQSPTSNHSPTSCPPICPGYRWMCLRR. A helical membrane pass occupies residues 254-274; the sequence is FIIFLFILLLCLIFLLVLLDY. At 275 to 348 the chain is on the virion surface side; sequence QGMLPVCPLL…GASVRFSWLS (74 aa). Residue N320 is glycosylated (N-linked (GlcNAc...) asparagine; by host). A helical membrane pass occupies residues 349 to 369; the sequence is LLVPFVQWFVGLSPTVWLSVI. At 370–375 the chain is on the intravirion side; the sequence is WMMWYW. A helical membrane pass occupies residues 376-398; that stretch reads GPSLYNILSPFLPLLPIFFCLWV. Residues 399-400 lie on the Virion surface side of the membrane; the sequence is YI.

It belongs to the orthohepadnavirus major surface antigen family. In terms of assembly, in its internal form (Li-HBsAg), interacts with the capsid protein and with the isoform S. Interacts with host chaperone CANX. As to quaternary structure, associates with host chaperone CANX through its pre-S2 N glycan; this association may be essential for isoform M proper secretion. Interacts with isoform L. Interacts with the antigens of satellite virus HDV (HDVAgs); this interaction is required for encapsidation of HDV genomic RNA. In terms of processing, isoform M is N-terminally acetylated by host at a ratio of 90%, and N-glycosylated by host at the pre-S2 region. Myristoylated.

The protein resides in the virion membrane. In terms of biological role, the large envelope protein exists in two topological conformations, one which is termed 'external' or Le-HBsAg and the other 'internal' or Li-HBsAg. In its external conformation the protein attaches the virus to cell receptors and thereby initiating infection. This interaction determines the species specificity and liver tropism. This attachment induces virion internalization predominantly through caveolin-mediated endocytosis. The large envelope protein also assures fusion between virion membrane and endosomal membrane. In its internal conformation the protein plays a role in virion morphogenesis and mediates the contact with the nucleocapsid like a matrix protein. Its function is as follows. The middle envelope protein plays an important role in the budding of the virion. It is involved in the induction of budding in a nucleocapsid independent way. In this process the majority of envelope proteins bud to form subviral lipoprotein particles of 22 nm of diameter that do not contain a nucleocapsid. This chain is Large envelope protein, found in Homo sapiens (Human).